The chain runs to 234 residues: Elongation factor Tu, chloroplastic (234 aa).

The tr-type G domain maps to K1 to E125. N47–D50 contributes to the GTP binding site.

It belongs to the TRAFAC class translation factor GTPase superfamily. Classic translation factor GTPase family. EF-Tu/EF-1A subfamily.

The protein localises to the plastid. The protein resides in the chloroplast. The enzyme catalyses GTP + H2O = GDP + phosphate + H(+). Functionally, GTP hydrolase that promotes the GTP-dependent binding of aminoacyl-tRNA to the A-site of ribosomes during protein biosynthesis. In Pandorina morum (Freshwater green alga), this protein is Elongation factor Tu, chloroplastic (tufA).